We begin with the raw amino-acid sequence, 119 residues long: Beta-2-microglobulin (119 aa).

Residues 1–20 (MACFVVVALLVLLSLSGLEA) form the signal peptide. The region spanning 25–114 (PKIQVYSRHP…VTFSTPKTVK (90 aa)) is the Ig-like C1-type domain. C45 and C100 are disulfide-bonded.

The protein belongs to the beta-2-microglobulin family. In terms of assembly, heterodimer of an alpha chain and a beta chain. Beta-2-microglobulin is the beta-chain of major histocompatibility complex class I molecules.

It is found in the secreted. Its function is as follows. Component of the class I major histocompatibility complex (MHC). Involved in the presentation of peptide antigens to the immune system. This is Beta-2-microglobulin (B2M) from Leontopithecus chrysopygus (Golden-rumped lion tamarin).